Here is a 166-residue protein sequence, read N- to C-terminus: Regulator of ribonuclease activity A (166 aa).

The protein belongs to the RraA family. As to quaternary structure, homotrimer. Binds to both RNA-binding sites in the C-terminal region of Rne and to RhlB.

Its subcellular location is the cytoplasm. Functionally, globally modulates RNA abundance by binding to RNase E (Rne) and regulating its endonucleolytic activity. Can modulate Rne action in a substrate-dependent manner by altering the composition of the degradosome. Modulates RNA-binding and helicase activities of the degradosome. This Pasteurella multocida (strain Pm70) protein is Regulator of ribonuclease activity A.